Reading from the N-terminus, the 342-residue chain is Replication factor C subunit 4 (342 aa).

Residues Val24, Val36, 61–68 (GMPGIGKT), Asn157, and Arg215 each bind ATP.

Belongs to the activator 1 small subunits family. Heteropentamer of subunits rfc1, rfc2, rfc3, rfc4 and rfc5 that forms a complex (RFC) with PCNA in the presence of ATP. Two other complexes exist where rfc1 can be replaced by either ctf18 or elg1 to form the ctf18-RFC or the elg1-RFC complexes respectively.

Its subcellular location is the nucleus. The elongation of primed DNA templates by DNA polymerase delta and epsilon requires the action of the accessory proteins PCNA and activator 1. This is Replication factor C subunit 4 (rfc4) from Schizosaccharomyces pombe (strain 972 / ATCC 24843) (Fission yeast).